The chain runs to 475 residues: Zinc finger protein 383 (475 aa).

One can recognise a KRAB domain in the interval 6 to 77; that stretch reads VMFSDVSIDF…GRELTRGLCS (72 aa). 11 consecutive C2H2-type zinc fingers follow at residues 170–192, 198–220, 226–248, 254–276, 282–304, 310–332, 338–360, 366–388, 394–416, 422–444, and 450–472; these read FECKKCGKAFSQNSQFIQHQRIH, YECKECGKFFSCGSHVTRHLKIH, FECKECGKAFSCSSYLSQHQRIH, YECKECGKAFSYCSNLIDHQRIH, YACKVCGKAFTKSSQLFQHVRIH, YECKECGKAFTQSSKLVQHQRIH, YECKECGKAFSSGSALTNHQRIH, YDCKECGKAFTQSSQLRQHQRIH, FECLECGKAFTQNSQLFQHQRIH, YECNECGKAFNKCSNLTRHLRIH, and YNCKECGKAFSSGSDLIRHQGIH.

This sequence belongs to the krueppel C2H2-type zinc-finger protein family.

The protein localises to the nucleus. The protein resides in the cytoplasm. Its function is as follows. May function as a transcriptional repressor, suppressing transcriptional activities mediated by MAPK signaling pathways. The protein is Zinc finger protein 383 (ZNF383) of Macaca fascicularis (Crab-eating macaque).